We begin with the raw amino-acid sequence, 444 residues long: Chromosome partition protein MukF (444 aa).

Positions leucine 212–isoleucine 240 are leucine-zipper.

This sequence belongs to the MukF family. In terms of assembly, interacts, and probably forms a ternary complex, with MukE and MukB via its C-terminal region. The complex formation is stimulated by calcium or magnesium. It is required for an interaction between MukE and MukB.

The protein resides in the cytoplasm. It is found in the nucleoid. Involved in chromosome condensation, segregation and cell cycle progression. May participate in facilitating chromosome segregation by condensation DNA from both sides of a centrally located replisome during cell division. Not required for mini-F plasmid partitioning. Probably acts via its interaction with MukB and MukE. Overexpression results in anucleate cells. It has a calcium binding activity. The sequence is that of Chromosome partition protein MukF from Haemophilus influenzae (strain PittEE).